The following is a 335-amino-acid chain: Anthranilate phosphoribosyltransferase (335 aa).

Residues glycine 79, 82 to 83 (GD), threonine 87, 89 to 92 (NIST), 107 to 115 (KHGNRSASS), and alanine 119 each bind 5-phospho-alpha-D-ribose 1-diphosphate. An anthranilate-binding site is contributed by glycine 79. Position 91 (serine 91) interacts with Mg(2+). Asparagine 110 lines the anthranilate pocket. Arginine 165 lines the anthranilate pocket. Mg(2+) contacts are provided by aspartate 224 and glutamate 225.

Belongs to the anthranilate phosphoribosyltransferase family. In terms of assembly, homodimer. Requires Mg(2+) as cofactor.

It carries out the reaction N-(5-phospho-beta-D-ribosyl)anthranilate + diphosphate = 5-phospho-alpha-D-ribose 1-diphosphate + anthranilate. It functions in the pathway amino-acid biosynthesis; L-tryptophan biosynthesis; L-tryptophan from chorismate: step 2/5. Functionally, catalyzes the transfer of the phosphoribosyl group of 5-phosphorylribose-1-pyrophosphate (PRPP) to anthranilate to yield N-(5'-phosphoribosyl)-anthranilate (PRA). This is Anthranilate phosphoribosyltransferase from Methanobrevibacter smithii (strain ATCC 35061 / DSM 861 / OCM 144 / PS).